The following is a 71-amino-acid chain: Ranatuerin-2Va (71 aa).

An N-terminal signal peptide occupies residues 1–22 (MFTLKKSFLLLFFLGTITLSLC). Positions 23 to 43 (EQERGADEDDGVEMTEEEVKR) are excised as a propeptide. Residues Cys66 and Cys71 are joined by a disulfide bond.

In terms of tissue distribution, expressed by the skin glands.

The protein localises to the secreted. Antimicrobial peptide. The sequence is that of Ranatuerin-2Va from Odorrana versabilis (Chinese bamboo leaf odorous frog).